The following is a 180-amino-acid chain: 5'(3')-deoxyribonucleotidase (180 aa).

Catalysis depends on D9, which acts as the Nucleophile. Residues D9, D11, and D134 each contribute to the Mg(2+) site. D11 (proton donor) is an active-site residue.

The protein belongs to the 5'(3')-deoxyribonucleotidase family. It depends on Mg(2+) as a cofactor.

Functionally, dephosphorylates nucleoside monophosphates such as the 5' and 2'(3')-phosphates of deoxyribonucleotides in vitro. This chain is 5'(3')-deoxyribonucleotidase, found in Clostridium acetobutylicum (strain ATCC 824 / DSM 792 / JCM 1419 / IAM 19013 / LMG 5710 / NBRC 13948 / NRRL B-527 / VKM B-1787 / 2291 / W).